We begin with the raw amino-acid sequence, 112 residues long: UPF0212 protein Mhun_0078 (112 aa).

It belongs to the UPF0212 family.

The chain is UPF0212 protein Mhun_0078 from Methanospirillum hungatei JF-1 (strain ATCC 27890 / DSM 864 / NBRC 100397 / JF-1).